A 337-amino-acid chain; its full sequence is Mating-type protein MAT-2 (337 aa).

The segment at residues 125–193 (APRPMNCWII…EHLRQHPNYK (69 aa)) is a DNA-binding region (HMG box). Residues 171–219 (KRPWQDAAQSAKEEHLRQHPNYKYTPRKPGEKKKRQSRKSKRAAATTTA) are disordered. Basic residues predominate over residues 200-212 (GEKKKRQSRKSKR).

The protein resides in the nucleus. This Cochliobolus sativus (Common root rot and spot blotch fungus) protein is Mating-type protein MAT-2 (MAT2).